A 276-amino-acid chain; its full sequence is ADP-dependent (S)-NAD(P)H-hydrate dehydratase (276 aa).

Residues 7–274 (METLNSINIP…NEIPYAMKQL (268 aa)) enclose the YjeF C-terminal domain. (6S)-NADPHX is bound by residues Ala42, Gly105, and His154. Gly216 lines the AMP pocket. Asp217 serves as a coordination point for (6S)-NADPHX.

This sequence belongs to the NnrD/CARKD family. In terms of assembly, homotetramer. Requires Mg(2+) as cofactor.

The catalysed reaction is (6S)-NADHX + ADP = AMP + phosphate + NADH + H(+). It catalyses the reaction (6S)-NADPHX + ADP = AMP + phosphate + NADPH + H(+). Functionally, catalyzes the dehydration of the S-form of NAD(P)HX at the expense of ADP, which is converted to AMP. Together with NAD(P)HX epimerase, which catalyzes the epimerization of the S- and R-forms, the enzyme allows the repair of both epimers of NAD(P)HX, a damaged form of NAD(P)H that is a result of enzymatic or heat-dependent hydration. The polypeptide is ADP-dependent (S)-NAD(P)H-hydrate dehydratase (Staphylococcus aureus (strain NCTC 8325 / PS 47)).